The primary structure comprises 776 residues: Ribosomal RNA large subunit methyltransferase K/L (776 aa).

The 116-residue stretch at 68 to 183 (DLYKICLWSR…DKQAELYLDL (116 aa)) folds into the THUMP domain.

It belongs to the methyltransferase superfamily. RlmKL family.

The protein resides in the cytoplasm. It catalyses the reaction guanosine(2445) in 23S rRNA + S-adenosyl-L-methionine = N(2)-methylguanosine(2445) in 23S rRNA + S-adenosyl-L-homocysteine + H(+). The enzyme catalyses guanosine(2069) in 23S rRNA + S-adenosyl-L-methionine = N(2)-methylguanosine(2069) in 23S rRNA + S-adenosyl-L-homocysteine + H(+). Its function is as follows. Specifically methylates the guanine in position 2445 (m2G2445) and the guanine in position 2069 (m7G2069) of 23S rRNA. This is Ribosomal RNA large subunit methyltransferase K/L from Psychrobacter cryohalolentis (strain ATCC BAA-1226 / DSM 17306 / VKM B-2378 / K5).